Consider the following 404-residue polypeptide: Flavohemoprotein (404 aa).

A Globin domain is found at 1–138 (MLSEQTRSLV…LADTLIGIEN (138 aa)). H85 contributes to the heme b binding site. Catalysis depends on charge relay system residues Y95 and E137. The tract at residues 149 to 404 (GGWSGWRPFR…EVFGSHPGDD (256 aa)) is reductase. An FAD-binding FR-type domain is found at 152 to 263 (SGWRPFRVAK…SAPQGDFFLH (112 aa)). FAD-binding positions include Y190 and 206–209 (RQYS). 276–281 (GVGQTP) is a binding site for NADP(+). Residue 396 to 399 (VFGS) participates in FAD binding.

This sequence belongs to the globin family. Two-domain flavohemoproteins subfamily. In the C-terminal section; belongs to the flavoprotein pyridine nucleotide cytochrome reductase family. It depends on heme b as a cofactor. FAD is required as a cofactor.

It catalyses the reaction 2 nitric oxide + NADPH + 2 O2 = 2 nitrate + NADP(+) + H(+). It carries out the reaction 2 nitric oxide + NADH + 2 O2 = 2 nitrate + NAD(+) + H(+). Its function is as follows. Is involved in NO detoxification in an aerobic process, termed nitric oxide dioxygenase (NOD) reaction that utilizes O(2) and NAD(P)H to convert NO to nitrate, which protects the bacterium from various noxious nitrogen compounds. Therefore, plays a central role in the inducible response to nitrosative stress. The sequence is that of Flavohemoprotein from Chromobacterium violaceum (strain ATCC 12472 / DSM 30191 / JCM 1249 / CCUG 213 / NBRC 12614 / NCIMB 9131 / NCTC 9757 / MK).